The following is a 92-amino-acid chain: Mediator-associated protein 3 (92 aa).

The 58-residue stretch at 13–70 (KDLRRKIKKTVKKILESSNLYKITEIKAREEASLKLDLDLSQDPYKVIVKEEVENFLE) folds into the DEK-C domain.

In terms of assembly, associated with the Mediator complex.

Its subcellular location is the nucleus. In Arabidopsis thaliana (Mouse-ear cress), this protein is Mediator-associated protein 3.